We begin with the raw amino-acid sequence, 119 residues long: MSIDMKKKHRIKKNDEFQAVFQKGKSNANRQFVVYQLDKEEQPNFRIGLSVSKKIGNAVVRNRIKRMVRQAITELKDEIASGKDFVIIARKPCAEMTYEEVKKSLIHVFKRSGMKRIKK.

The protein belongs to the RnpA family. In terms of assembly, consists of a catalytic RNA component (M1 or rnpB) and a protein subunit.

The catalysed reaction is Endonucleolytic cleavage of RNA, removing 5'-extranucleotides from tRNA precursor.. In terms of biological role, RNaseP catalyzes the removal of the 5'-leader sequence from pre-tRNA to produce the mature 5'-terminus. It can also cleave other RNA substrates such as 4.5S RNA. The protein component plays an auxiliary but essential role in vivo by binding to the 5'-leader sequence and broadening the substrate specificity of the ribozyme. This chain is Ribonuclease P protein component, found in Bacillus cereus (strain ATCC 14579 / DSM 31 / CCUG 7414 / JCM 2152 / NBRC 15305 / NCIMB 9373 / NCTC 2599 / NRRL B-3711).